The primary structure comprises 212 residues: Interleukin-6 (212 aa).

An N-terminal signal peptide occupies residues 1–27 (MNSFSTSAFGPVAFSLGLLLVLPAAFP). Cysteines 72 and 78 form a disulfide. N-linked (GlcNAc...) asparagine glycosylation occurs at Asn-73. Phosphoserine is present on Ser-81. A disulfide bridge links Cys-101 with Cys-111. N-linked (GlcNAc...) asparagine glycosylation occurs at Asn-172.

This sequence belongs to the IL-6 superfamily. Component of a hexamer of two molecules each of IL6, IL6R and IL6ST; first binds to IL6R to associate with the signaling subunit IL6ST. Interacts with IL6R (via the N-terminal ectodomain); this interaction may be affected by IL6R-binding with SORL1, hence decreasing IL6 cis signaling. Interacts with SORL1 (via the N-terminal ectodomain); this interaction leads to IL6 internalization and lysosomal degradation. May form a trimeric complex with the soluble SORL1 ectodomain and soluble IL6R receptor; this interaction might stabilize circulating IL6, hence promoting IL6 trans signaling.

It localises to the secreted. Its function is as follows. Cytokine with a wide variety of biological functions in immunity, tissue regeneration, and metabolism. Binds to IL6R, then the complex associates to the signaling subunit IL6ST/gp130 to trigger the intracellular IL6-signaling pathway. The interaction with the membrane-bound IL6R and IL6ST stimulates 'classic signaling', whereas the binding of IL6 and soluble IL6R to IL6ST stimulates 'trans-signaling'. Alternatively, 'cluster signaling' occurs when membrane-bound IL6:IL6R complexes on transmitter cells activate IL6ST receptors on neighboring receiver cells. In terms of biological role, IL6 is a potent inducer of the acute phase response. Rapid production of IL6 contributes to host defense during infection and tissue injury, but excessive IL6 synthesis is involved in disease pathology. In the innate immune response, is synthesized by myeloid cells, such as macrophages and dendritic cells, upon recognition of pathogens through toll-like receptors (TLRs) at the site of infection or tissue injury. In the adaptive immune response, is required for the differentiation of B cells into immunoglobulin-secreting cells. Plays a major role in the differentiation of CD4(+) T cell subsets. Essential factor for the development of T follicular helper (Tfh) cells that are required for the induction of germinal-center formation. Required to drive naive CD4(+) T cells to the Th17 lineage. Also required for proliferation of myeloma cells and the survival of plasmablast cells. Acts as an essential factor in bone homeostasis and on vessels directly or indirectly by induction of VEGF, resulting in increased angiogenesis activity and vascular permeability. Induces, through 'trans-signaling' and synergistically with IL1B and TNF, the production of VEGF. Involved in metabolic controls, is discharged into the bloodstream after muscle contraction increasing lipolysis and improving insulin resistance. 'Trans-signaling' in central nervous system also regulates energy and glucose homeostasis. Mediates, through GLP-1, crosstalk between insulin-sensitive tissues, intestinal L cells and pancreatic islets to adapt to changes in insulin demand. Also acts as a myokine. Plays a protective role during liver injury, being required for maintenance of tissue regeneration. Also has a pivotal role in iron metabolism by regulating HAMP/hepcidin expression upon inflammation or bacterial infection. Through activation of IL6ST-YAP-NOTCH pathway, induces inflammation-induced epithelial regeneration. The protein is Interleukin-6 (IL6) of Macaca mulatta (Rhesus macaque).